Here is a 295-residue protein sequence, read N- to C-terminus: MAYNSNSNNNNNNIVVVFDFDKTIIDVDSDNWVIDELGFTDLFNQLLPTMPWNTLMDRMMKELHDQGKTIEEIKQVLRTIPIHPRVVPAIKSAHDLGCELRIVSDANMFFIETIVEHLGISELFSEINSNPGYVDERGTLKISPYHDFTKSPHSCSCGTCPPNMCKGLIIERIQQSLAKEGKKKMIYLGDGAGDYCPSLKLNTEDYVMPRKNFPVWDLISQNPMLIKAAIREWTDGQSMEMILIGTIEEIRLEEEKEKMLTSAENNCKMQTISIGINNVHHEPILPRALRVSQSS.

Catalysis depends on Asp19, which acts as the Nucleophile. Mg(2+) contacts are provided by Asp19 and Asp21. Asp21 serves as the catalytic Proton donor. Asp30 and Asp105 together coordinate substrate. Asp190 is a binding site for Mg(2+).

It belongs to the HAD-like hydrolase superfamily. Tetramer. The cofactor is Mg(2+). Requires Fe(2+) as cofactor. It depends on Ni(2+) as a cofactor. Co(2+) is required as a cofactor. Mn(2+) serves as cofactor.

It catalyses the reaction diphosphate + H2O = 2 phosphate + H(+). Its function is as follows. Catalyzes the specific cleavage of pyrophosphate. This is Inorganic pyrophosphatase 1 (PS2) from Arabidopsis thaliana (Mouse-ear cress).